Consider the following 463-residue polypeptide: Thiamine-repressible acid phosphatase pho4 (463 aa).

Residues 1–18 (MKLSGISLWLLAASIVHA) form the signal peptide. Catalysis depends on histidine 69, which acts as the Nucleophile. N-linked (GlcNAc...) asparagine glycosylation is found at asparagine 98, asparagine 104, asparagine 186, asparagine 221, asparagine 251, and asparagine 328. Aspartate 341 (proton donor) is an active-site residue. Residues asparagine 433, asparagine 439, and asparagine 458 are each glycosylated (N-linked (GlcNAc...) asparagine).

It belongs to the histidine acid phosphatase family.

It is found in the secreted. It localises to the cell wall. The enzyme catalyses a phosphate monoester + H2O = an alcohol + phosphate. May dephosphorylate thiamine phosphates. The protein is Thiamine-repressible acid phosphatase pho4 (pho4) of Schizosaccharomyces pombe (strain 972 / ATCC 24843) (Fission yeast).